The following is a 441-amino-acid chain: Synaptotagmin-1 (441 aa).

Residues 1-69 (MVKLDFSSQD…DVVKEKVMQQ (69 aa)) lie on the Vesicular side of the membrane. A helical membrane pass occupies residues 70-96 (TGMPEWAFVFLGFVFILLVLACAFCLI). Topologically, residues 97–441 (RKLFGKKRHG…EEGDKKDDKK (345 aa)) are cytoplasmic. C2 domains follow at residues 159–278 (KLGR…EEWK) and 292–425 (SLGD…AQWH). Ca(2+) contacts are provided by D190, D196, D248, F249, D250, S253, K254, D256, D323, D329, D383, D385, and D391.

It belongs to the synaptotagmin family. Ca(2+) is required as a cofactor. In terms of tissue distribution, localized to regions known to be rich in synapses and appears to be associated with synaptic vesicles. Also found in some non-neuronal secretory structures.

The protein localises to the cytoplasmic vesicle. It is found in the secretory vesicle. It localises to the synaptic vesicle membrane. Its subcellular location is the synapse. May have a regulatory role in the membrane interactions during trafficking of synaptic vesicles at the active zone of the synapse. It binds acidic phospholipids with a specificity that requires the presence of both an acidic head group and a diacyl backbone. Involved in necrotic cell death. In Caenorhabditis elegans, this protein is Synaptotagmin-1 (snt-1).